Consider the following 376-residue polypeptide: Chaperone protein DnaJ (376 aa).

One can recognise a J domain in the interval 5–70 (DYYEILGVSK…QKRAAYDQYG (66 aa)). The segment at 131-209 (GVTKEIRIPT…CHGHGRVERS (79 aa)) adopts a CR-type zinc-finger fold. Zn(2+) is bound by residues Cys-144, Cys-147, Cys-161, Cys-164, Cys-183, Cys-186, Cys-197, and Cys-200. CXXCXGXG motif repeat units lie at residues 144–151 (CDVCHGSG), 161–168 (CPTCHGSG), 183–190 (CPHCQGRG), and 197–204 (CNKCHGHG).

It belongs to the DnaJ family. As to quaternary structure, homodimer. The cofactor is Zn(2+).

The protein localises to the cytoplasm. Participates actively in the response to hyperosmotic and heat shock by preventing the aggregation of stress-denatured proteins and by disaggregating proteins, also in an autonomous, DnaK-independent fashion. Unfolded proteins bind initially to DnaJ; upon interaction with the DnaJ-bound protein, DnaK hydrolyzes its bound ATP, resulting in the formation of a stable complex. GrpE releases ADP from DnaK; ATP binding to DnaK triggers the release of the substrate protein, thus completing the reaction cycle. Several rounds of ATP-dependent interactions between DnaJ, DnaK and GrpE are required for fully efficient folding. Also involved, together with DnaK and GrpE, in the DNA replication of plasmids through activation of initiation proteins. The polypeptide is Chaperone protein DnaJ (Escherichia coli (strain K12 / MC4100 / BW2952)).